Consider the following 556-residue polypeptide: Formate--tetrahydrofolate ligase (556 aa).

65–72 lines the ATP pocket; it reads TPAGEGKS.

This sequence belongs to the formate--tetrahydrofolate ligase family.

The catalysed reaction is (6S)-5,6,7,8-tetrahydrofolate + formate + ATP = (6R)-10-formyltetrahydrofolate + ADP + phosphate. The protein operates within one-carbon metabolism; tetrahydrofolate interconversion. The polypeptide is Formate--tetrahydrofolate ligase (Streptococcus equi subsp. zooepidemicus (strain H70)).